The primary structure comprises 395 residues: MRGALLLLVLLSAQHVSTSQFWLSVEVEQIDWTDGCLTTALCSHPRFQLIKDLLPVNEKVTMNWPIVEHFDKESHRPFVSYWPSGRTEDISMSAQVVGTDRTYGFPRICDQSPSVRIFPEEHKKIVAHLEKEKPTGKPPMDSLKIKVKGKCFNATMTVIKHTERCPWCPDPKEITIIGQEPGSEATGLRAGSAAWLFGSSSSLISDDRIVHIGVLVLAIVAVLSSTAFAIILVMYLRNKRLVKETLKKPRFHPYISVKGHEIAEDNCRYDLPWEQQQRPLTYWMTSSNKSSESTMTSPLDSASSLHGSGGSHQNPHMYNSHHHQHQQQQNAHPSEMYHSTYTRDGYQTYRPPPPSVHPPIFPPQTQLFHPPTYSTQRHVTSPNSSRNDDSGLESV.

Low complexity predominate over residues 286–306 (SSNKSSESTMTSPLDSASSLH). The interval 286-395 (SSNKSSESTM…RNDDSGLESV (110 aa)) is disordered. A compositionally biased stretch (pro residues) spans 350–362 (RPPPPSVHPPIFP). The span at 364-385 (QTQLFHPPTYSTQRHVTSPNSS) shows a compositional bias: polar residues.

This is an uncharacterized protein from Caenorhabditis elegans.